A 371-amino-acid chain; its full sequence is tRNA N6-adenosine threonylcarbamoyltransferase (371 aa).

Fe cation-binding residues include H110 and H114. Substrate is bound by residues 132-136 (LVSGG), D165, G178, D182, and N289. D317 is a Fe cation binding site.

It belongs to the KAE1 / TsaD family. Fe(2+) is required as a cofactor.

It is found in the cytoplasm. It catalyses the reaction L-threonylcarbamoyladenylate + adenosine(37) in tRNA = N(6)-L-threonylcarbamoyladenosine(37) in tRNA + AMP + H(+). Functionally, required for the formation of a threonylcarbamoyl group on adenosine at position 37 (t(6)A37) in tRNAs that read codons beginning with adenine. Is involved in the transfer of the threonylcarbamoyl moiety of threonylcarbamoyl-AMP (TC-AMP) to the N6 group of A37, together with TsaE and TsaB. TsaD likely plays a direct catalytic role in this reaction. This is tRNA N6-adenosine threonylcarbamoyltransferase from Solidesulfovibrio magneticus (strain ATCC 700980 / DSM 13731 / RS-1) (Desulfovibrio magneticus).